The sequence spans 86 residues: Putative regulatory protein Dvul_2085 (86 aa).

It belongs to the RemA family.

The chain is Putative regulatory protein Dvul_2085 from Nitratidesulfovibrio vulgaris (strain DP4) (Desulfovibrio vulgaris).